The sequence spans 501 residues: MSSAEMGKFDISPDEDSSSYSSNSNDFSYPYPTKPAAMKSHYADMDPENQNFLLDSNVGKKKYETQYHPGTTSFGMSVFNLSNAIVGSGILGLSYAMANTGIALFVILLLVVSILSLYSVHLLLKTANEGGSLLYEQLGMKAFGMPGKLAASGSITMQNIGAMSSYLFIVKYELPLVIKTFMNIEENAGHWYLNGDYLVLLVSVILILPLSLLKNLGYLGYTSGFSLLCMVFFLIVVIWKMFQIPCPMESDIINATLINATLAPFADENITISDACKPEYFIFNSQTVYAVPILTFSFVCHPAILPIYEELKSRSRKRMMNVSYVSFFAMFLMYLLAALFGYLTFYGRVESELLHTYSAFLGADILLLIVRLAVLMAVTLTVPVVIFPIRSSVTQLLWAGKEFSWWRHCSITVVLLAFTNVLVIFVPTIRDIFGFIGASAAAMLIFILPSAFYIKLVKKEPMKSVQKIGAALFFLSGILVMTGCMTLIILDWIHTDASDGH.

The interval 1–26 is disordered; the sequence is MSSAEMGKFDISPDEDSSSYSSNSND. Residues 1 to 77 lie on the Cytoplasmic side of the membrane; it reads MSSAEMGKFD…HPGTTSFGMS (77 aa). Residues 1–97 are regulates protein turnover upon amino acid deprivation; the sequence is MSSAEMGKFD…SGILGLSYAM (97 aa). A helical membrane pass occupies residues 78–97; sequence VFNLSNAIVGSGILGLSYAM. Residue asparagine 83 participates in Na(+) binding. Over 98 to 103 the chain is Extracellular; it reads ANTGIA. A helical membrane pass occupies residues 104–124; it reads LFVILLLVVSILSLYSVHLLL. The Cytoplasmic portion of the chain corresponds to 125–159; it reads KTANEGGSLLYEQLGMKAFGMPGKLAASGSITMQN. Residues 160–178 traverse the membrane as a helical segment; sequence IGAMSSYLFIVKYELPLVI. The Extracellular segment spans residues 179–189; that stretch reads KTFMNIEENAG. Residues 190–210 traverse the membrane as a helical segment; that stretch reads HWYLNGDYLVLLVSVILILPL. At 211–218 the chain is on the cytoplasmic side; it reads SLLKNLGY. A helical transmembrane segment spans residues 219–239; that stretch reads LGYTSGFSLLCMVFFLIVVIW. The Extracellular segment spans residues 240–287; the sequence is KMFQIPCPMESDIINATLINATLAPFADENITISDACKPEYFIFNSQT. Cysteine 246 and cysteine 276 are disulfide-bonded. Asparagine 254 and asparagine 259 each carry an N-linked (GlcNAc...) asparagine glycan. Residues 288 to 308 traverse the membrane as a helical segment; that stretch reads VYAVPILTFSFVCHPAILPIY. The Cytoplasmic portion of the chain corresponds to 309 to 324; that stretch reads EELKSRSRKRMMNVSY. The helical transmembrane segment at 325–345 threads the bilayer; the sequence is VSFFAMFLMYLLAALFGYLTF. At 346–366 the chain is on the extracellular side; it reads YGRVESELLHTYSAFLGADIL. A helical membrane pass occupies residues 367–387; sequence LLIVRLAVLMAVTLTVPVVIF. Threonine 381 is a binding site for Na(+). At 388 to 408 the chain is on the cytoplasmic side; it reads PIRSSVTQLLWAGKEFSWWRH. Residues 409–429 traverse the membrane as a helical segment; the sequence is CSITVVLLAFTNVLVIFVPTI. Topologically, residues 430–431 are extracellular; that stretch reads RD. The chain crosses the membrane as a helical span at residues 432-452; the sequence is IFGFIGASAAAMLIFILPSAF. Topologically, residues 453–467 are cytoplasmic; that stretch reads YIKLVKKEPMKSVQK. A helical membrane pass occupies residues 468–490; it reads IGAALFFLSGILVMTGCMTLIIL. At 491–501 the chain is on the extracellular side; it reads DWIHTDASDGH.

The protein belongs to the amino acid/polyamine transporter 2 family.

It is found in the cell membrane. It catalyses the reaction L-alanine(in) + Na(+)(in) = L-alanine(out) + Na(+)(out). The enzyme catalyses glycine(in) + Na(+)(in) = glycine(out) + Na(+)(out). The catalysed reaction is L-serine(in) + Na(+)(in) = L-serine(out) + Na(+)(out). It carries out the reaction L-proline(in) + Na(+)(in) = L-proline(out) + Na(+)(out). It catalyses the reaction L-methionine(in) + Na(+)(in) = L-methionine(out) + Na(+)(out). The enzyme catalyses L-histidine(in) + Na(+)(in) = L-histidine(out) + Na(+)(out). The catalysed reaction is L-asparagine(in) + Na(+)(in) = L-asparagine(out) + Na(+)(out). It carries out the reaction L-glutamine(in) + Na(+)(in) = L-glutamine(out) + Na(+)(out). It catalyses the reaction L-threonine(in) + Na(+)(in) = L-threonine(out) + Na(+)(out). The enzyme catalyses L-leucine(in) + Na(+)(in) = L-leucine(out) + Na(+)(out). The catalysed reaction is L-phenylalanine(in) + Na(+)(in) = L-phenylalanine(out) + Na(+)(out). With respect to regulation, inhibited by N-methyl-D-glucamine. Inhibited by choline. Allosteric regulation of sodium ions binding by pH. In terms of biological role, symporter that cotransports neutral amino acids and sodium ions from the extracellular to the intracellular side of the cell membrane. The transport is pH-sensitive, Li(+)-intolerant, electrogenic, driven by the Na(+) electrochemical gradient and cotransports of neutral amino acids and sodium ions with a stoichiometry of 1:1. The sequence is that of Sodium-coupled neutral amino acid symporter 2 from Gallus gallus (Chicken).